Reading from the N-terminus, the 166-residue chain is PTS system glucose-specific EIIA component (166 aa).

Residues 34–138 (DPVFAQKMMG…SVISPIIITN (105 aa)) enclose the PTS EIIA type-1 domain. The Zn(2+) site is built by H71 and H86. H86 functions as the Tele-phosphohistidine intermediate; for EIIA activity in the catalytic mechanism. The residue at position 86 (H86) is a Phosphohistidine; by HPr.

As to quaternary structure, heterodimer with glycerol kinase (glpk). Zn(2+) serves as cofactor.

The protein resides in the cytoplasm. The phosphoenolpyruvate-dependent sugar phosphotransferase system (sugar PTS), a major carbohydrate active transport system, catalyzes the phosphorylation of incoming sugar substrates concomitantly with their translocation across the cell membrane. The enzyme II complex composed of PtsG and Crr is involved in glucose transport. This chain is PTS system glucose-specific EIIA component (crr), found in Staphylococcus aureus (strain Mu50 / ATCC 700699).